The following is a 454-amino-acid chain: uncharacterized protein (454 aa).

125–132 (GDVGCGKT) serves as a coordination point for ATP.

It belongs to the AFG1 ATPase family.

This is an uncharacterized protein from Schizosaccharomyces pombe (strain 972 / ATCC 24843) (Fission yeast).